The following is a 447-amino-acid chain: Phosphoglucosamine mutase (447 aa).

The active-site Phosphoserine intermediate is the serine 101. The Mg(2+) site is built by serine 101, aspartate 242, aspartate 244, and aspartate 246. At serine 101 the chain carries Phosphoserine.

It belongs to the phosphohexose mutase family. Mg(2+) serves as cofactor. Post-translationally, activated by phosphorylation.

It catalyses the reaction alpha-D-glucosamine 1-phosphate = D-glucosamine 6-phosphate. Catalyzes the conversion of glucosamine-6-phosphate to glucosamine-1-phosphate. The protein is Phosphoglucosamine mutase of Azorhizobium caulinodans (strain ATCC 43989 / DSM 5975 / JCM 20966 / LMG 6465 / NBRC 14845 / NCIMB 13405 / ORS 571).